A 585-amino-acid polypeptide reads, in one-letter code: Zinc finger protein Eos (585 aa).

Disordered regions lie at residues 1 to 43 (MHTP…PDFL) and 68 to 98 (EKEFLGAPVGPSVSTPNSQHSSPSRSLSANS). Residues 25-34 (QGKDNLERDP) are compositionally biased toward basic and acidic residues. Residues 79–98 (SVSTPNSQHSSPSRSLSANS) show a composition bias toward polar residues. Residue Lys-100 forms a Glycyl lysine isopeptide (Lys-Gly) (interchain with G-Cter in SUMO2) linkage. Ser-105 carries the post-translational modification Phosphoserine. C2H2-type zinc fingers lie at residues 159–181 (LKCDVCGMVCIGPNVLMVHKRSH), 187–209 (FHCNQCGASFTQKGNLLRHIKLH), 215–237 (FKCPFCNYACRRRDALTGHLRTH), and 248–271 (YKCNYCGRSYKQQSTLEEHKERCH). The interval 281–585 (AQALAGQPGD…HIVRGEHKVG (305 aa)) is interaction with FOXP3. Lys-335 carries the post-translational modification N6-acetyllysine. A disordered region spans residues 410–489 (PGRLELPGSR…QPPPTIVVGR (80 aa)). A CTBP-binding motif PEDLA motif is present at residues 425–429 (PEDLA). Positions 475-484 (QGPPPQPPPT) are enriched in pro residues. A Glycyl lysine isopeptide (Lys-Gly) (interchain with G-Cter in SUMO2) cross-link involves residue Lys-500. 2 consecutive C2H2-type zinc fingers follow at residues 530–552 (FKCEHCRILFLDHVMFTIHMGCH) and 558–582 (FECNICGYHSQDRYEFSSHIVRGEH).

Belongs to the Ikaros C2H2-type zinc-finger protein family. As to quaternary structure, self-associates. Interacts with other family members; IKZF1, IKZF2, IKZF3 and IKZF5. Interacts with CTBP2. Interacts with SPI1, MITF, FOXP3 and CTBP1. In terms of tissue distribution, highly expressed in skeletal muscle, low levels of expression in heart, thymus, kidney, liver, and spleen. Expressed in the hematopoietic cell lines MOLT-4, NALM-6 and K-562. Highly expressed in THP-1 and M-07e cell lines, which have characteristics of myeloid and early megakaryocytic cells respectively.

The protein localises to the nucleus. Functionally, DNA-binding protein that binds to the 5'GGGAATRCC-3' Ikaros-binding sequence. Transcriptional repressor. Interacts with SPI1 and MITF to repress transcription of the CTSK and ACP5 promoters via recruitment of corepressors SIN3A and CTBP2. May be involved in the development of central and peripheral nervous systems. Essential for the inhibitory function of regulatory T-cells (Treg). Mediates FOXP3-mediated gene silencing in regulatory T-cells (Treg) via recruitment of corepressor CTBP1. The protein is Zinc finger protein Eos (IKZF4) of Homo sapiens (Human).